Reading from the N-terminus, the 235-residue chain is Dephospho-CoA kinase (235 aa).

The 205-residue stretch at 15–219 folds into the DPCK domain; the sequence is NVGLTGSISC…KKERLQRKSA (205 aa). Residue 23-28 coordinates ATP; that stretch reads SCGKST.

The protein belongs to the CoaE family.

It is found in the cytoplasm. It carries out the reaction 3'-dephospho-CoA + ATP = ADP + CoA + H(+). It participates in cofactor biosynthesis; coenzyme A biosynthesis; CoA from (R)-pantothenate: step 5/5. Functionally, catalyzes the phosphorylation of the 3'-hydroxyl group of dephosphocoenzyme A to form coenzyme A. The chain is Dephospho-CoA kinase from Syntrophus aciditrophicus (strain SB).